Here is a 157-residue protein sequence, read N- to C-terminus: Iron-sulfur cluster repair protein DnrN (157 aa).

This sequence belongs to the RIC family.

The protein localises to the cytoplasm. Di-iron-containing protein involved in the repair of iron-sulfur clusters damaged by oxidative and nitrosative stress conditions. Required to repair damage caused by nitric oxide to FNR and NsrR transcription factors. This chain is Iron-sulfur cluster repair protein DnrN (dnrN), found in Neisseria gonorrhoeae.